The primary structure comprises 474 residues: Glutamate--tRNA ligase (474 aa).

The short motif at 9–19 (PSPTGYLHVGG) is the 'HIGH' region element. The 'KMSKS' region motif lies at 240–244 (KLSKR). Lys-243 is an ATP binding site.

This sequence belongs to the class-I aminoacyl-tRNA synthetase family. Glutamate--tRNA ligase type 1 subfamily. As to quaternary structure, monomer.

Its subcellular location is the cytoplasm. The enzyme catalyses tRNA(Glu) + L-glutamate + ATP = L-glutamyl-tRNA(Glu) + AMP + diphosphate. Catalyzes the attachment of glutamate to tRNA(Glu) in a two-step reaction: glutamate is first activated by ATP to form Glu-AMP and then transferred to the acceptor end of tRNA(Glu). This is Glutamate--tRNA ligase from Aliivibrio fischeri (strain ATCC 700601 / ES114) (Vibrio fischeri).